Consider the following 426-residue polypeptide: Mothers against decapentaplegic homolog 7 (426 aa).

Residues 13–55 are disordered; the sequence is LWRSRAPGGEDEEEGAGGGGGGGELRGEGATDSRAHGAGGGGP. Positions 37 to 47 are enriched in basic and acidic residues; it reads LRGEGATDSRA. Residues Lys64 and Lys70 each carry the N6-acetyllysine; alternate modification. Glycyl lysine isopeptide (Lys-Gly) (interchain with G-Cter in ubiquitin); alternate cross-links involve residues Lys64 and Lys70. An MH1 domain is found at 64–207; that stretch reads KAVRGAKGHH…LSRLCELESP (144 aa). Residues Cys125, Cys180, Cys192, and His197 each coordinate Zn(2+). Residues 208–211 carry the PY-motif motif; it reads PPPY. The segment at 208–217 is important for interaction with SMURF2; sequence PPPYSRYPMD. Ser249 carries the phosphoserine modification. In terms of domain architecture, MH2 spans 261–426; the sequence is WCVVAYWEEK…CWLEVIFNSR (166 aa).

The protein belongs to the dwarfin/SMAD family. In terms of assembly, interacts with WWP1. Interacts with COPS5. Interacts with NEDD4L. Interacts with STAMBP. Interacts with RNF111, AXIN1 and AXIN2. Interacts with PPP1R15A. Interacts (via MH2 domain) with EP300. Interacts with ACVR1B, SMURF1, SMURF2 and TGFBR1; SMAD7 recruits SMURF1 and SMURF2 to the TGF-beta receptor and regulates its degradation. Interacts with PDPK1 (via PH domain). Interacts with TSC22D1/TSC-22; the interaction requires TGF-beta and the interaction is inhibited by TGFBR1. Post-translationally, phosphorylation on Ser-249 does not affect its stability, nuclear localization or inhibitory function in TGFB signaling; however it affects its ability to regulate transcription. Phosphorylated by PDPK1. Ubiquitinated by WWP1. Polyubiquitinated by RNF111, which is enhanced by AXIN1 and promotes proteasomal degradation. In response to TGF-beta, ubiquitinated by SMURF1; which promotes its degradation. In terms of processing, acetylation prevents ubiquitination and degradation mediated by SMURF1. Ubiquitous with higher expression in the lung and vascular endothelium.

It is found in the nucleus. The protein resides in the cytoplasm. Its function is as follows. Antagonist of signaling by TGF-beta (transforming growth factor) type 1 receptor superfamily members; has been shown to inhibit TGF-beta (Transforming growth factor) and activin signaling by associating with their receptors thus preventing SMAD2 access. Functions as an adapter to recruit SMURF2 to the TGF-beta receptor complex. Also acts by recruiting the PPP1R15A-PP1 complex to TGFBR1, which promotes its dephosphorylation. Positively regulates PDPK1 kinase activity by stimulating its dissociation from the 14-3-3 protein YWHAQ which acts as a negative regulator. The chain is Mothers against decapentaplegic homolog 7 (SMAD7) from Homo sapiens (Human).